A 141-amino-acid polypeptide reads, in one-letter code: Large ribosomal subunit protein uL11 (141 aa).

Belongs to the universal ribosomal protein uL11 family. As to quaternary structure, part of the ribosomal stalk of the 50S ribosomal subunit. Interacts with L10 and the large rRNA to form the base of the stalk. L10 forms an elongated spine to which L12 dimers bind in a sequential fashion forming a multimeric L10(L12)X complex. Post-translationally, one or more lysine residues are methylated.

Its function is as follows. Forms part of the ribosomal stalk which helps the ribosome interact with GTP-bound translation factors. The chain is Large ribosomal subunit protein uL11 from Lactobacillus acidophilus (strain ATCC 700396 / NCK56 / N2 / NCFM).